The primary structure comprises 153 residues: 6,7-dimethyl-8-ribityllumazine synthase (153 aa).

5-amino-6-(D-ribitylamino)uracil is bound by residues Phe21, 55–57 (AFE), and 79–81 (TVI). 84–85 (AT) contributes to the (2S)-2-hydroxy-3-oxobutyl phosphate binding site. His87 acts as the Proton donor in catalysis. Phe112 lines the 5-amino-6-(D-ribitylamino)uracil pocket. Arg126 is a binding site for (2S)-2-hydroxy-3-oxobutyl phosphate.

Belongs to the DMRL synthase family. In terms of assembly, forms an icosahedral capsid composed of 60 subunits, arranged as a dodecamer of pentamers.

The enzyme catalyses (2S)-2-hydroxy-3-oxobutyl phosphate + 5-amino-6-(D-ribitylamino)uracil = 6,7-dimethyl-8-(1-D-ribityl)lumazine + phosphate + 2 H2O + H(+). It functions in the pathway cofactor biosynthesis; riboflavin biosynthesis; riboflavin from 2-hydroxy-3-oxobutyl phosphate and 5-amino-6-(D-ribitylamino)uracil: step 1/2. In terms of biological role, catalyzes the formation of 6,7-dimethyl-8-ribityllumazine by condensation of 5-amino-6-(D-ribitylamino)uracil with 3,4-dihydroxy-2-butanone 4-phosphate. This is the penultimate step in the biosynthesis of riboflavin. This Bacillus cereus (strain B4264) protein is 6,7-dimethyl-8-ribityllumazine synthase.